A 1428-amino-acid polypeptide reads, in one-letter code: DNA topoisomerase 2 (1428 aa).

Residues Asn-70, Asn-99, 127-129, and 140-147 contribute to the ATP site; these read SSN and GRNGYGAK. Residues 333 to 336 are interaction with DNA; the sequence is KKKK. Residue 365–367 coordinates ATP; it reads QTK. A Toprim domain is found at 443 to 557; it reads CTLVLTEGDS…GLLDIQGFLL (115 aa). Mg(2+)-binding residues include Glu-449, Asp-526, and Asp-528. The region spanning 692 to 1159 is the Topo IIA-type catalytic domain; the sequence is IPNVLDGFKP…SAKDIWNTDL (468 aa). Residue Tyr-782 is the O-(5'-phospho-DNA)-tyrosine intermediate of the active site. An interaction with DNA region spans residues 965–974; the sequence is KLISPISLMN. Disordered regions lie at residues 1083-1102, 1176-1217, 1240-1288, and 1303-1428; these read KGATSDEEDEESSHEDTENV, ARGG…RKGK, KAPT…ELSK, and MGST…NEED. The residue at position 1086 (Thr-1086) is a Phosphothreonine; by CK2. A Phosphoserine; by CK2 modification is found at Ser-1087. A compositionally biased stretch (basic residues) spans 1207–1217; it reads KNKKSTARKGK. Position 1252 is a phosphoserine (Ser-1252). Position 1258 is a phosphothreonine; by CK2 (Thr-1258). A phosphoserine; by CK2 mark is found at Ser-1266, Ser-1269, and Ser-1272. Over residues 1275–1286 the composition is skewed to basic and acidic residues; the sequence is DIKKEDKDEGEL. The span at 1332-1347 shows a compositional bias: basic residues; the sequence is TAVKPKLAKKPVRKQQ. Ser-1353, Ser-1356, Ser-1408, and Ser-1423 each carry phosphoserine; by CK2. Residues 1403 to 1428 are compositionally biased toward acidic residues; it reads ELSDDSFIEDDEEENQGSDVSFNEED.

This sequence belongs to the type II topoisomerase family. Homodimer. Mg(2+) is required as a cofactor. The cofactor is Mn(2+). It depends on Ca(2+) as a cofactor. Phosphorylation enhances the activity. Stimulates decatenation activity.

It localises to the nucleus. The catalysed reaction is ATP-dependent breakage, passage and rejoining of double-stranded DNA.. Control of topological states of DNA by transient breakage and subsequent rejoining of DNA strands. Topoisomerase II makes double-strand breaks. Essential during mitosis and meiosis for proper segregation of daughter chromosomes. The polypeptide is DNA topoisomerase 2 (TOP2) (Saccharomyces cerevisiae (strain ATCC 204508 / S288c) (Baker's yeast)).